The sequence spans 161 residues: 3-isopropylmalate dehydratase small subunit (161 aa).

It belongs to the LeuD family. LeuD type 2 subfamily. As to quaternary structure, heterodimer of LeuC and LeuD.

It carries out the reaction (2R,3S)-3-isopropylmalate = (2S)-2-isopropylmalate. Its pathway is amino-acid biosynthesis; L-leucine biosynthesis; L-leucine from 3-methyl-2-oxobutanoate: step 2/4. Its function is as follows. Catalyzes the isomerization between 2-isopropylmalate and 3-isopropylmalate, via the formation of 2-isopropylmaleate. The protein is 3-isopropylmalate dehydratase small subunit of Sulfolobus acidocaldarius (strain ATCC 33909 / DSM 639 / JCM 8929 / NBRC 15157 / NCIMB 11770).